The chain runs to 82 residues: MSPLISAASVLAAGLAVGLASIGPGVGQGTAAGQALEGIARQPEAEGKIRGTLLLSFAFMESLTIYGLVVALALLFANPFVS.

Transmembrane regions (helical) follow at residues 3–23 (PLIS…ASIG) and 57–77 (FAFM…LLFA).

Belongs to the ATPase C chain family. F-type ATPases have 2 components, F(1) - the catalytic core - and F(0) - the membrane proton channel. F(1) has five subunits: alpha(3), beta(3), gamma(1), delta(1), epsilon(1). F(0) has four main subunits: a(1), b(1), b'(1) and c(10-14). The alpha and beta chains form an alternating ring which encloses part of the gamma chain. F(1) is attached to F(0) by a central stalk formed by the gamma and epsilon chains, while a peripheral stalk is formed by the delta, b and b' chains.

The protein resides in the plastid. It is found in the chloroplast thylakoid membrane. In terms of biological role, f(1)F(0) ATP synthase produces ATP from ADP in the presence of a proton or sodium gradient. F-type ATPases consist of two structural domains, F(1) containing the extramembraneous catalytic core and F(0) containing the membrane proton channel, linked together by a central stalk and a peripheral stalk. During catalysis, ATP synthesis in the catalytic domain of F(1) is coupled via a rotary mechanism of the central stalk subunits to proton translocation. Key component of the F(0) channel; it plays a direct role in translocation across the membrane. A homomeric c-ring of between 10-14 subunits forms the central stalk rotor element with the F(1) delta and epsilon subunits. The polypeptide is ATP synthase subunit c, chloroplastic (Mesostigma viride (Green alga)).